The chain runs to 1225 residues: Catenin delta-2 (1225 aa).

4 disordered regions span residues 1–51 (MFAR…TSAI), 87–117 (SETG…EDEL), 134–242 (SGIL…HLPD), and 256–312 (SSTL…KSYS). 2 stretches are compositionally biased toward polar residues: residues 20 to 51 (QPSS…TSAI) and 98 to 108 (AEEQFQWQSQD). Residues 49–84 (SAILASVKEQELQFERLTRELEAERQIVASQLERCK) are a coiled coil. Positions 149-160 (SLLSQSALQLNS) are enriched in low complexity. Polar residues-rich tracts occupy residues 172-187 (YHSN…TPSQ) and 195-209 (ARAT…TTSR). Position 209 is an omega-N-methylarginine (R209). The segment covering 217-229 (EPAPPPPPPPREP) has biased composition (pro residues). R264 bears the Omega-N-methylarginine mark. S267 and S276 each carry phosphoserine. An omega-N-methylarginine mark is found at R282 and R296. Positions 299-312 (SPKQSPSRLAKSYS) are enriched in polar residues. Residues S327, S360, S415, and S461 each carry the phosphoserine modification. The stretch at 394–438 (GSRASYSSQHGHLGPELRALQSPEHHIDPIYEDRVYQKPPMRSLS) is one ARM 1 repeat. 2 disordered regions span residues 432 to 483 (PPMR…NAAA) and 514 to 542 (SPYS…QKDP). Residues 469-478 (LQRTGSQHGP) show a composition bias toward polar residues. S514 is modified (phosphoserine). Y516 bears the Phosphotyrosine mark. ARM repeat units follow at residues 540–579 (KDPR…HLCF), 582–621 (NKIK…NLVY), 626–666 (DDNK…NLSS), 682–724 (LTNA…NVSS), 728–773 (EARR…NLSY), 835–875 (PKGI…NLAA), 882–921 (VYIR…NMAL), and 975–1018 (MENA…SMWQ). The disordered stretch occupies residues 1042–1077 (TIERDRQRPYSSSRTPSISPVRVSPNNRSASAPASP). Residues 1050-1059 (PYSSSRTPSI) show a composition bias toward polar residues. Residues S1065 and S1076 each carry the phosphoserine modification. Residues 1065–1077 (SPNNRSASAPASP) are compositionally biased toward low complexity.

The protein belongs to the beta-catenin family. Binds to E-cadherin at a juxtamembrane site within the cytoplasmic domain. Interacts with PDZD2. Interacts with ZBTB33. Binds to PSEN1. Interacts with ARHGEF28. Interacts (via the extreme C-terminus) with FRMPD2 (via the PDZ 2 domain). Interacts with CDK5. Interacts with CTNNB1. Interacts with GSK3A and GSK3B. Interacts with DNM2. Interacts with CCDC85B. Post-translationally, O-glycosylated. In terms of processing, phosphorylated by CDK5. Phosphorylated by GSK3B. As to expression, expressed in brain; highest expression is observed in fetal brain.

The protein localises to the nucleus. It localises to the cell junction. Its subcellular location is the adherens junction. The protein resides in the cell projection. It is found in the dendrite. The protein localises to the perikaryon. Its function is as follows. Has a critical role in neuronal development, particularly in the formation and/or maintenance of dendritic spines and synapses. Involved in the regulation of Wnt signaling. It probably acts on beta-catenin turnover, facilitating beta-catenin interaction with GSK3B, phosphorylation, ubiquitination and degradation. Functions as a transcriptional activator when bound to ZBTB33. May be involved in neuronal cell adhesion and tissue morphogenesis and integrity by regulating adhesion molecules. This Homo sapiens (Human) protein is Catenin delta-2 (CTNND2).